The primary structure comprises 341 residues: Anthranilate phosphoribosyltransferase (341 aa).

5-phospho-alpha-D-ribose 1-diphosphate-binding positions include G83, S91, 93 to 96 (NTST), 111 to 115 (KHGNR), and S123. G83 contributes to the anthranilate binding site. S95 contributes to the Mg(2+) binding site. Residue N114 coordinates anthranilate. R169 lines the anthranilate pocket. Mg(2+)-binding residues include D228 and E229.

The protein belongs to the anthranilate phosphoribosyltransferase family. Homodimer. Requires Mg(2+) as cofactor.

The catalysed reaction is N-(5-phospho-beta-D-ribosyl)anthranilate + diphosphate = 5-phospho-alpha-D-ribose 1-diphosphate + anthranilate. Its pathway is amino-acid biosynthesis; L-tryptophan biosynthesis; L-tryptophan from chorismate: step 2/5. Its function is as follows. Catalyzes the transfer of the phosphoribosyl group of 5-phosphorylribose-1-pyrophosphate (PRPP) to anthranilate to yield N-(5'-phosphoribosyl)-anthranilate (PRA). The chain is Anthranilate phosphoribosyltransferase from Hyphomonas neptunium (strain ATCC 15444).